Here is a 364-residue protein sequence, read N- to C-terminus: tRNA 2-selenouridine synthase (364 aa).

The Rhodanese domain maps to 14 to 137 (LIADTPIIDV…LRQTAIQATI (124 aa)). Catalysis depends on cysteine 97, which acts as the S-selanylcysteine intermediate.

This sequence belongs to the SelU family. As to quaternary structure, monomer.

The catalysed reaction is 5-methylaminomethyl-2-thiouridine(34) in tRNA + selenophosphate + (2E)-geranyl diphosphate + H2O + H(+) = 5-methylaminomethyl-2-selenouridine(34) in tRNA + (2E)-thiogeraniol + phosphate + diphosphate. The enzyme catalyses 5-methylaminomethyl-2-thiouridine(34) in tRNA + (2E)-geranyl diphosphate = 5-methylaminomethyl-S-(2E)-geranyl-thiouridine(34) in tRNA + diphosphate. It carries out the reaction 5-methylaminomethyl-S-(2E)-geranyl-thiouridine(34) in tRNA + selenophosphate + H(+) = 5-methylaminomethyl-2-(Se-phospho)selenouridine(34) in tRNA + (2E)-thiogeraniol. It catalyses the reaction 5-methylaminomethyl-2-(Se-phospho)selenouridine(34) in tRNA + H2O = 5-methylaminomethyl-2-selenouridine(34) in tRNA + phosphate. Involved in the post-transcriptional modification of the uridine at the wobble position (U34) of tRNA(Lys), tRNA(Glu) and tRNA(Gln). Catalyzes the conversion of 2-thiouridine (S2U-RNA) to 2-selenouridine (Se2U-RNA). Acts in a two-step process involving geranylation of 2-thiouridine (S2U) to S-geranyl-2-thiouridine (geS2U) and subsequent selenation of the latter derivative to 2-selenouridine (Se2U) in the tRNA chain. This is tRNA 2-selenouridine synthase from Escherichia coli (strain ATCC 8739 / DSM 1576 / NBRC 3972 / NCIMB 8545 / WDCM 00012 / Crooks).